A 336-amino-acid polypeptide reads, in one-letter code: Holliday junction branch migration complex subunit RuvB (336 aa).

A large ATPase domain (RuvB-L) region spans residues 4–184 (ADRLIQPQVI…FGIPLRLEFY (181 aa)). Residues Arg24, Gly65, Lys68, Thr69, Thr70, 131–133 (EDY), Arg174, Tyr184, and Arg221 contribute to the ATP site. Thr69 lines the Mg(2+) pocket. The segment at 185–255 (NIKDLSTIVI…VAELALDMLD (71 aa)) is small ATPAse domain (RuvB-S). Positions 258 to 336 (AEGFDYMDRK…HFNLIQPEAK (79 aa)) are head domain (RuvB-H). The DNA site is built by Arg294, Arg313, and Arg318.

The protein belongs to the RuvB family. Homohexamer. Forms an RuvA(8)-RuvB(12)-Holliday junction (HJ) complex. HJ DNA is sandwiched between 2 RuvA tetramers; dsDNA enters through RuvA and exits via RuvB. An RuvB hexamer assembles on each DNA strand where it exits the tetramer. Each RuvB hexamer is contacted by two RuvA subunits (via domain III) on 2 adjacent RuvB subunits; this complex drives branch migration. In the full resolvosome a probable DNA-RuvA(4)-RuvB(12)-RuvC(2) complex forms which resolves the HJ.

The protein resides in the cytoplasm. The catalysed reaction is ATP + H2O = ADP + phosphate + H(+). Functionally, the RuvA-RuvB-RuvC complex processes Holliday junction (HJ) DNA during genetic recombination and DNA repair, while the RuvA-RuvB complex plays an important role in the rescue of blocked DNA replication forks via replication fork reversal (RFR). RuvA specifically binds to HJ cruciform DNA, conferring on it an open structure. The RuvB hexamer acts as an ATP-dependent pump, pulling dsDNA into and through the RuvAB complex. RuvB forms 2 homohexamers on either side of HJ DNA bound by 1 or 2 RuvA tetramers; 4 subunits per hexamer contact DNA at a time. Coordinated motions by a converter formed by DNA-disengaged RuvB subunits stimulates ATP hydrolysis and nucleotide exchange. Immobilization of the converter enables RuvB to convert the ATP-contained energy into a lever motion, pulling 2 nucleotides of DNA out of the RuvA tetramer per ATP hydrolyzed, thus driving DNA branch migration. The RuvB motors rotate together with the DNA substrate, which together with the progressing nucleotide cycle form the mechanistic basis for DNA recombination by continuous HJ branch migration. Branch migration allows RuvC to scan DNA until it finds its consensus sequence, where it cleaves and resolves cruciform DNA. This is Holliday junction branch migration complex subunit RuvB from Shewanella piezotolerans (strain WP3 / JCM 13877).